Consider the following 53-residue polypeptide: UPF0391 membrane protein PA5482 (53 aa).

2 consecutive transmembrane segments (helical) span residues 4–24 and 29–49; these read WAIT…GGIA and GIAK…FFFG.

This sequence belongs to the UPF0391 family.

The protein localises to the cell membrane. This chain is UPF0391 membrane protein PA5482, found in Pseudomonas aeruginosa (strain ATCC 15692 / DSM 22644 / CIP 104116 / JCM 14847 / LMG 12228 / 1C / PRS 101 / PAO1).